We begin with the raw amino-acid sequence, 246 residues long: tRNA (guanine-N(1)-)-methyltransferase (246 aa).

S-adenosyl-L-methionine-binding positions include G114 and 133–138 (LGDYVL).

Belongs to the RNA methyltransferase TrmD family. As to quaternary structure, homodimer.

It is found in the cytoplasm. It carries out the reaction guanosine(37) in tRNA + S-adenosyl-L-methionine = N(1)-methylguanosine(37) in tRNA + S-adenosyl-L-homocysteine + H(+). Functionally, specifically methylates guanosine-37 in various tRNAs. This chain is tRNA (guanine-N(1)-)-methyltransferase, found in Enterococcus faecalis (strain ATCC 700802 / V583).